Here is a 453-residue protein sequence, read N- to C-terminus: T-box transcription factor T homolog (453 aa).

Residues 47–217 (LWRRFSKLTN…YNPFAKAFLD (171 aa)) constitute a DNA-binding region (T-box). Positions 283–304 (RSHRSTPYPPPPYEQKYSPTSA) are disordered.

The protein localises to the nucleus. Its function is as follows. May be involved in the transcriptional regulation of genes required for gastrulation. The chain is T-box transcription factor T homolog from Patiria pectinifera (Starfish).